The following is a 343-amino-acid chain: Methionine import ATP-binding protein MetN 1 (343 aa).

An ABC transporter domain is found at 2 to 241; sequence IKLSNITKVF…PKTPLAQKFI (240 aa). Residue 38-45 coordinates ATP; sequence GASGAGKS.

It belongs to the ABC transporter superfamily. Methionine importer (TC 3.A.1.24) family. The complex is composed of two ATP-binding proteins (MetN), two transmembrane proteins (MetI) and a solute-binding protein (MetQ).

The protein localises to the cell inner membrane. The catalysed reaction is L-methionine(out) + ATP + H2O = L-methionine(in) + ADP + phosphate + H(+). It carries out the reaction D-methionine(out) + ATP + H2O = D-methionine(in) + ADP + phosphate + H(+). In terms of biological role, part of the ABC transporter complex MetNIQ involved in methionine import. Responsible for energy coupling to the transport system. This chain is Methionine import ATP-binding protein MetN 1, found in Salmonella paratyphi A (strain ATCC 9150 / SARB42).